We begin with the raw amino-acid sequence, 77 residues long: Conotoxin King-Kong 2 (77 aa).

The signal sequence occupies residues 1–22 (MKLTCMMIVAVLFLTAWTFVTA). Positions 23–49 (DDSGNGLENLFSKAHHEMKNPEASNLN) are excised as a propeptide. Cystine bridges form between Cys-52–Cys-67, Cys-59–Cys-71, and Cys-66–Cys-76. Cys-76 bears the Cysteine amide mark.

It belongs to the conotoxin O1 superfamily. In terms of tissue distribution, expressed by the venom duct.

It is found in the secreted. This Conus textile (Cloth-of-gold cone) protein is Conotoxin King-Kong 2.